Here is a 116-residue protein sequence, read N- to C-terminus: Large ribosomal subunit protein uL18 (116 aa).

This sequence belongs to the universal ribosomal protein uL18 family. In terms of assembly, part of the 50S ribosomal subunit; part of the 5S rRNA/L5/L18/L25 subcomplex. Contacts the 5S and 23S rRNAs.

This is one of the proteins that bind and probably mediate the attachment of the 5S RNA into the large ribosomal subunit, where it forms part of the central protuberance. The protein is Large ribosomal subunit protein uL18 of Hahella chejuensis (strain KCTC 2396).